A 93-amino-acid chain; its full sequence is Small ribosomal subunit protein uS15 (93 aa).

This sequence belongs to the universal ribosomal protein uS15 family. As to quaternary structure, part of the 30S ribosomal subunit. Forms a bridge to the 50S subunit in the 70S ribosome, contacting the 23S rRNA.

In terms of biological role, one of the primary rRNA binding proteins, it binds directly to 16S rRNA where it helps nucleate assembly of the platform of the 30S subunit by binding and bridging several RNA helices of the 16S rRNA. Functionally, forms an intersubunit bridge (bridge B4) with the 23S rRNA of the 50S subunit in the ribosome. In Ehrlichia chaffeensis (strain ATCC CRL-10679 / Arkansas), this protein is Small ribosomal subunit protein uS15.